We begin with the raw amino-acid sequence, 550 residues long: Keratin, type II cytoskeletal 74 (550 aa).

The segment at M1 to Q140 is head. The interval E141–L176 is coil 1A. The IF rod domain maps to E141 to M468. Positions Q177–Y195 are linker 1. The coil 1B stretch occupies residues I196–I287. A linker 12 region spans residues Q288 to I311. A coil 2 region spans residues I312–E464. The tract at residues E465–R550 is tail. The tract at residues H491–R550 is disordered. The span at A502–T521 shows a compositional bias: low complexity. Positions R527 to D536 are enriched in basic and acidic residues.

It belongs to the intermediate filament family. As to quaternary structure, heterotetramer of two type I and two type II keratins.

Functionally, has a role in hair formation. Specific component of keratin intermediate filaments in the inner root sheath (IRS) of the hair follicle. The polypeptide is Keratin, type II cytoskeletal 74 (KRT74) (Bos taurus (Bovine)).